The following is a 309-amino-acid chain: Interferon-inducible double-stranded RNA-dependent protein kinase activator A homolog A (309 aa).

A disordered region spans residues 1 to 22; it reads MSQERFPAAPKMSSEKPTSLDA. DRBM domains are found at residues 31-98, 123-191, and 236-304; these read TPIQ…ILRG, NPVG…KFKT, and DYVK…YLKI.

This sequence belongs to the PRKRA family. As to quaternary structure, homodimer. Interacts with dicer1 and eif2ak2/pkr. Also able to interact with dsRNA.

It is found in the cytoplasm. It localises to the perinuclear region. Its subcellular location is the nucleus. Functionally, activates eif2ak2/pkr in the absence of double-stranded RNA (dsRNA), leading to phosphorylation of eif2s1/efi2-alpha and inhibition of translation and induction of apoptosis. Required for siRNA production by dicer1 and for subsequent siRNA-mediated post-transcriptional gene silencing. Does not seem to be required for processing of pre-miRNA to miRNA by dicer1. This chain is Interferon-inducible double-stranded RNA-dependent protein kinase activator A homolog A (prkra-a), found in Xenopus laevis (African clawed frog).